We begin with the raw amino-acid sequence, 251 residues long: Fibroblast growth factor-binding protein 1 (251 aa).

Positions 1 to 20 (MRLHSLILLSFLLLATQAFS) are cleaved as a signal peptide. The interval 25 to 62 (KRAKNAPHSTAEEGVEGSAPSLGKAQNKQRSRTSKSLT) is disordered. Cystine bridges form between Cys-74/Cys-91, Cys-100/Cys-133, and Cys-109/Cys-145. Positions 160 to 189 (NARGNTKPRKEKAEVSAREHNKVQEAVSTE) are disordered. Positions 170–182 (EKAEVSAREHNKV) are enriched in basic and acidic residues. An O-linked (GalNAc...) serine glycan is attached at Ser-175. Positions 210–251 (RDPECLEDPDVLNQRKTALEFCGESWSSICTFFLNMLQATSC) are sufficient for interaction with FGF2 and FGF2-induced effects. Cystine bridges form between Cys-214–Cys-251 and Cys-231–Cys-239.

It belongs to the fibroblast growth factor-binding protein family. Found in a complex with FGFBP1, FGF1 and FGF2. Interacts with FGF1, FGF7, FGF10, FGF22 and HSPG2. Interacts with FGF2. Expressed in intestine, ovary, lung, placenta and normal and wounded skin.

It localises to the secreted. It is found in the extracellular space. The protein resides in the cell membrane. Acts as a carrier protein that releases fibroblast-binding factors (FGFs) from the extracellular matrix (EM) storage and thus enhances the mitogenic activity of FGFs. Enhances FGF2 signaling during tissue repair, angiogenesis and in tumor growth. This Mus musculus (Mouse) protein is Fibroblast growth factor-binding protein 1 (Fgfbp1).